A 603-amino-acid chain; its full sequence is Methylenetetrahydrofolate reductase 1 (603 aa).

The active-site Proton donor/acceptor is the Glu-21. Residues 21 to 26 (EFFPPK) and 53 to 54 (TW) each bind NAD(+). FAD contacts are provided by residues 53–54 (TW), His-82, 112–114 (RGD), 130–131 (YA), Tyr-153, and Lys-173. A substrate-binding site is contributed by Asp-114. Residues Gln-184 and Tyr-276 each coordinate substrate. Phosphoserine is present on Ser-355.

It belongs to the methylenetetrahydrofolate reductase family. Requires FAD as cofactor.

It carries out the reaction (6S)-5-methyl-5,6,7,8-tetrahydrofolate + NADP(+) = (6R)-5,10-methylene-5,6,7,8-tetrahydrofolate + NADPH + H(+). The enzyme catalyses (6S)-5-methyl-5,6,7,8-tetrahydrofolate + NAD(+) = (6R)-5,10-methylene-5,6,7,8-tetrahydrofolate + NADH + H(+). Its pathway is one-carbon metabolism; tetrahydrofolate interconversion. Functionally, major methylenetetrahydrofolate reductase required to generate the methyl groups necessary for methionine synthetase to convert homocysteine to methionine. Performs 80 to 85 percent of the total methylenetetrahydrofolate reductase activity of the cells. The sequence is that of Methylenetetrahydrofolate reductase 1 (met9) from Schizosaccharomyces pombe (strain 972 / ATCC 24843) (Fission yeast).